The following is a 400-amino-acid chain: Tryptophan synthase beta chain (400 aa).

An N6-(pyridoxal phosphate)lysine modification is found at K95.

It belongs to the TrpB family. As to quaternary structure, tetramer of two alpha and two beta chains. It depends on pyridoxal 5'-phosphate as a cofactor.

It catalyses the reaction (1S,2R)-1-C-(indol-3-yl)glycerol 3-phosphate + L-serine = D-glyceraldehyde 3-phosphate + L-tryptophan + H2O. Its pathway is amino-acid biosynthesis; L-tryptophan biosynthesis; L-tryptophan from chorismate: step 5/5. Its function is as follows. The beta subunit is responsible for the synthesis of L-tryptophan from indole and L-serine. This is Tryptophan synthase beta chain from Chlorobaculum tepidum (strain ATCC 49652 / DSM 12025 / NBRC 103806 / TLS) (Chlorobium tepidum).